Reading from the N-terminus, the 378-residue chain is D-galactarolactone cycloisomerase (378 aa).

The Mg(2+) site is built by D194, E220, and E246. The Proton acceptor role is filled by H296.

The protein belongs to the mandelate racemase/muconate lactonizing enzyme family. Homooctamer. The cofactor is Mg(2+).

It carries out the reaction D-glucaro-1,4-lactone = 5-dehydro-4-deoxy-D-glucarate + H(+). It catalyses the reaction D-galactaro-1,4-lactone = 5-dehydro-4-deoxy-D-glucarate + H(+). It participates in carbohydrate acid metabolism; D-galacturonate degradation via prokaryotic oxidative pathway. Functionally, catalyzes the ring opening of D-galactaro-1,4-lactone to yield 5-keto-4-deoxy-D-glucarate (KDG) via a beta-elimination reaction. This is a step in the oxidative degradation pathway of D-galacturonate, which allows A.tumefaciens to utilize D-galacturonate as a sole carbon source. To a lesser extent, can also use D-glucaro-1,4-lactone as substrate to produce KDG, but cannot use D-galactaro-1,5-lactone, D-glucaro-6,3-lactone and linear D-glucarate. This Agrobacterium fabrum (strain C58 / ATCC 33970) (Agrobacterium tumefaciens (strain C58)) protein is D-galactarolactone cycloisomerase (gci).